Reading from the N-terminus, the 352-residue chain is Phosphoribosylformylglycinamidine cyclo-ligase (352 aa).

Belongs to the AIR synthase family.

It localises to the cytoplasm. The catalysed reaction is 2-formamido-N(1)-(5-O-phospho-beta-D-ribosyl)acetamidine + ATP = 5-amino-1-(5-phospho-beta-D-ribosyl)imidazole + ADP + phosphate + H(+). The protein operates within purine metabolism; IMP biosynthesis via de novo pathway; 5-amino-1-(5-phospho-D-ribosyl)imidazole from N(2)-formyl-N(1)-(5-phospho-D-ribosyl)glycinamide: step 2/2. The polypeptide is Phosphoribosylformylglycinamidine cyclo-ligase (Saccharophagus degradans (strain 2-40 / ATCC 43961 / DSM 17024)).